Here is a 703-residue protein sequence, read N- to C-terminus: Polyribonucleotide nucleotidyltransferase (703 aa).

The Mg(2+) site is built by Asp487 and Asp493. The region spanning 554-613 is the KH domain; it reads PKMETIKIDPDKIRDVIGKGGATIRSICEDTGASIDIDDNGTVRIYAESKLAADEAIYRI. Positions 623 to 691 constitute an S1 motif domain; sequence GKLYRGKVER…ARGRIKLSMK (69 aa).

It belongs to the polyribonucleotide nucleotidyltransferase family. As to quaternary structure, component of the RNA degradosome, which is a multiprotein complex involved in RNA processing and mRNA degradation. Requires Mg(2+) as cofactor.

The protein resides in the cytoplasm. It catalyses the reaction RNA(n+1) + phosphate = RNA(n) + a ribonucleoside 5'-diphosphate. Involved in mRNA degradation. Catalyzes the phosphorolysis of single-stranded polyribonucleotides processively in the 3'- to 5'-direction. The polypeptide is Polyribonucleotide nucleotidyltransferase (Hahella chejuensis (strain KCTC 2396)).